The following is a 697-amino-acid chain: Envelope glycoprotein G (697 aa).

The N-terminal stretch at 1-22 (MHAIAPRLLLLFVLSGLPGTRG) is a signal peptide. Residues 23 to 648 (GSGVPGPINP…WFLTASPALD (626 aa)) are Virion surface-facing. Residues Asn-104 and Asn-163 are each glycosylated (N-linked (GlcNAc...) asparagine; by host). Disordered stretches follow at residues 298 to 389 (HWAP…TTPP) and 402 to 630 (TPEE…PSGP). A compositionally biased stretch (basic and acidic residues) spans 322 to 335 (LRTDPEGVDPDVRA). Composition is skewed to low complexity over residues 375 to 389 (DPSA…TTPP) and 402 to 445 (TPEE…AKTP). Asn-435 carries N-linked (GlcNAc...) asparagine; by host glycosylation. Pro residues-rich tracts occupy residues 446 to 457 (PTTPAPTTPPPT) and 465 to 480 (PTTP…PATP). Residues 481–529 (GPVGASAAPTADSPLTALPPATAPGPSAANVSVAATTATPGTRGTARTP) show a composition bias toward low complexity. N-linked (GlcNAc...) asparagine; by host glycosylation occurs at Asn-510. A compositionally biased stretch (pro residues) spans 542–552 (DAPPGSPAPPP). Residues 560–576 (EEFEGAGDGEPPEDDDS) are compositionally biased toward acidic residues. The span at 587 to 603 (PNKPPPARPGPIRPTLP) shows a compositional bias: pro residues. A helical membrane pass occupies residues 649–669 (ILFIISTTIHTAAFVCLVALA). The Intravirion segment spans residues 670–697 (AQLWRGRAGRRRYAHPSVRYVCLPPERD).

It belongs to the alphaherpesvirinae glycoprotein G family.

It localises to the virion membrane. Its function is as follows. Chemokine-binding protein that inhibits neutrophils' chemotaxis. This is Envelope glycoprotein G (gG) from Homo sapiens (Human).